The sequence spans 1119 residues: MTISDKIRIYELSRDLNLDNKDILGAAQKLSISVKSHSSSISAEEAEKIKNLINKKNPDKKILSIKKPSIKKDNYKQNKEDKSSLISSVEEKPFKDNPEKKPLLKKPLNKPESLKIISNQPKSLNKPTITNSSQSQANLTNQNLNSKTSQNLNQDKRNFRNNLTPPIKSPTKPPIQLIAKPKNTTKNVQSNESSQNILNSGGGRQISNKPDQNSSKSKTKNINNRMSPPELVGAPIRREGPNKQNNKQKTSFKQTVPNRPGMLNRPGLRNKPSDQGRPGSFNRQTNTNRPGAPSSNKPGMPNRPGLRNKPSDQGRPGSFNRQVNTNRSGAPIRPGMPNRPGSKFNGPKSPGMRKPVSPNELLKLQKTNKSENDKQVINNNEKQNSETTKQKVKAPNSRPHTAPNSKKLPHRTFSNNSKKPGKTDWDDSAKLEALRNKNPQKQRQKVRIIGENDDSLTSETSGYSGEKFSILSASLARPKKEKSDESKSQKTIKQFKKKKKETTRQRQKRRAMELKAAKEAKQIRPEMIIVPEDNLTVQELADKLSLESSEIIKSLFFKGITATVTQSLDLATIETVAEEFGVPVLQDDIQEAAEKTVDMIESEDLDNLIKRPPVITVMGHVDHGKTSLLDSIRESRVASGEAGGITQHIGAYQVEFEHESKKKKLTFLDTPGHEAFTAMRARGTKVTDVAVLVVAADDGCRPQTLEAISHARAAKVPIVVAINKIDKEGASPDRVKQELSEKNLIAEDWGGDTVMVPVSAIKKQNINKLLEMILLVSEVEDLQANPDRFAKGTVIEAHLDKAKGPVATLLVQNGTLKSGDVLAAGSVLGKIRAMVDEHGNRIKDAGPSFPVEALGFSEVPTAGDEFEVYPDEKTARAIVGERATDARATKLAQQMASRRVSLSSLSTQANDGELKELNLILKADVQGSVEAILGSLEQLPKNEVQVRVLLSAPGEITETDIDLAAASGSVIIGFNTSLASGAKKAADANDVDVREYEVIYKLLEDIQLAMEGLLEPDLVEESLGKAEVRATFSVGKGAIAGCYIQTGKLQRNCSLRVIRSEKVIFEGNLDSLKRSKDDVKEVNTGFECGVGCDKFSSWIEGDIIEAFKFVTKKRTLTQE.

2 disordered regions span residues 64–463 and 477–507; these read SIKK…TSGY and RPKK…RQRQ. Residues 70-102 show a composition bias toward basic and acidic residues; it reads IKKDNYKQNKEDKSSLISSVEEKPFKDNPEKKP. 2 stretches are compositionally biased toward polar residues: residues 116–153 and 182–212; these read IISN…QNLN and KNTT…KPDQ. Residues 213–224 show a composition bias toward low complexity; it reads NSSKSKTKNINN. Polar residues-rich tracts occupy residues 242-257, 281-297, 319-328, and 375-387; these read NKQN…QTVP, FNRQ…SSNK, FNRQVNTNRS, and QVIN…NSET. A compositionally biased stretch (basic and acidic residues) spans 421 to 435; sequence GKTDWDDSAKLEALR. A compositionally biased stretch (basic residues) spans 493-507; that stretch reads KQFKKKKKETTRQRQ. One can recognise a tr-type G domain in the interval 610–782; that stretch reads KRPPVITVMG…ILLVSEVEDL (173 aa). Positions 619-626 are G1; that stretch reads GHVDHGKT. Residue 619-626 participates in GTP binding; the sequence is GHVDHGKT. Residues 644–648 are G2; the sequence is GITQH. Positions 669 to 672 are G3; the sequence is DTPG. GTP contacts are provided by residues 669 to 673 and 723 to 726; these read DTPGH and NKID. The tract at residues 723–726 is G4; sequence NKID. Residues 759 to 761 form a G5 region; the sequence is SAI.

This sequence belongs to the TRAFAC class translation factor GTPase superfamily. Classic translation factor GTPase family. IF-2 subfamily.

It localises to the cytoplasm. One of the essential components for the initiation of protein synthesis. Protects formylmethionyl-tRNA from spontaneous hydrolysis and promotes its binding to the 30S ribosomal subunits. Also involved in the hydrolysis of GTP during the formation of the 70S ribosomal complex. This chain is Translation initiation factor IF-2, found in Prochlorococcus marinus (strain MIT 9215).